A 1409-amino-acid chain; its full sequence is Tensin-2 (1409 aa).

The disordered stretch occupies residues 1-35; sequence MKSSGPVERLLRALGRRDSSRAASRPRKAEPHSFR. The span at 9–20 shows a compositional bias: basic and acidic residues; it reads RLLRALGRRDSS. The Phorbol-ester/DAG-type zinc finger occupies 31-79; that stretch reads PHSFREKVFRKKPPVCAVCKVTIDGTGVSCRVCKVATHRKCEAKVTSAC. Phosphothreonine is present on T91. Phosphoserine is present on residues S118 and S120. Positions 122–294 constitute a Phosphatase tensin-type domain; that stretch reads DPLMERRWDL…SYFSGLLSGS (173 aa). C231 acts as the Phosphocysteine intermediate in catalysis. A C2 tensin-type domain is found at 299–425; that stretch reads SSPLFLHYVL…ASVEFVFSSS (127 aa). The residue at position 455 (S455) is a Phosphoserine. Y456 is modified (phosphotyrosine). A disordered region spans residues 462–536; the sequence is HHEDSVDGSL…SPGRPPPTAA (75 aa). S466 is subject to Phosphoserine. A Phosphothreonine modification is found at T474. A Phosphoserine modification is found at S481. Y483 is modified (phosphotyrosine). The span at 491 to 506 shows a compositional bias: pro residues; that stretch reads RQTPPAPSPEPPPPPM. Omega-N-methylarginine is present on R555. Disordered stretches follow at residues 562–582, 812–1098, and 1111–1130; these read AILD…GVYP, PGEG…SSPA, and LSDN…QSNV. Phosphoserine occurs at positions 820, 825, 830, 832, 835, and 845. 2 stretches are compositionally biased toward polar residues: residues 900–918 and 930–940; these read SASS…SSPV and RSPTSAPTQRL. At T910 the chain carries Phosphothreonine. A phosphoserine mark is found at S931, S941, and S972. The span at 968–982 shows a compositional bias: pro residues; that stretch reads PLAPSPVSPTFPPSS. T977 carries the post-translational modification Phosphothreonine. Phosphoserine occurs at positions 991 and 1003. Positions 1046 to 1056 are enriched in pro residues; the sequence is PEPPQSSPTPA. An SH2 domain is found at 1140-1247; the sequence is WYKPHLSRDQ…SLPCCLRIPS (108 aa). T1182 bears the Phosphothreonine mark. Position 1247 is a phosphoserine (S1247). Residues 1275-1408 enclose the PTB domain; sequence ACSVLYLTSV…FITKVLLGQR (134 aa).

This sequence belongs to the PTEN phosphatase protein family. Interacts with AXL. Interacts with SYK; leading to its phosphorylation. Interacts with SQSTM1 (via PB1 domain); the interaction leads to sequestration of TNS2 in cytoplasmic aggregates with SQSTM1 and promotes TNS2 ubiquitination and proteasomal degradation. Post-translationally, ubiquitinated following sequestration in cytoplasmic aggregates with SQSTM1, leading to proteasomal degradation. In terms of tissue distribution, detected in heart, kidney, brain, thymus, spleen, liver, placenta, lung, skeletal muscle and small intestine.

The protein resides in the cell junction. Its subcellular location is the focal adhesion. It is found in the cell membrane. It localises to the cytoplasm. It carries out the reaction O-phospho-L-tyrosyl-[protein] + H2O = L-tyrosyl-[protein] + phosphate. Its function is as follows. Tyrosine-protein phosphatase which regulates cell motility, proliferation and muscle-response to insulin. Phosphatase activity is mediated by binding to phosphatidylinositol-3,4,5-triphosphate (PtdIns(3,4,5)P3) via the SH2 domain. In muscles and under catabolic conditions, dephosphorylates IRS1 leading to its degradation and muscle atrophy. Negatively regulates PI3K-AKT pathway activation. Dephosphorylates nephrin NPHS1 in podocytes which regulates activity of the mTORC1 complex. Under normal glucose conditions, NPHS1 outcompetes IRS1 for binding to phosphatidylinositol 3-kinase (PI3K) which balances mTORC1 activity but high glucose conditions lead to up-regulation of TNS2, increased NPHS1 dephosphorylation and activation of mTORC1, contributing to podocyte hypertrophy and proteinuria. Required for correct podocyte morphology, podocyte-glomerular basement membrane interaction and integrity of the glomerular filtration barrier. Enhances RHOA activation in the presence of DLC1. Plays a role in promoting DLC1-dependent remodeling of the extracellular matrix. This Homo sapiens (Human) protein is Tensin-2 (TNS2).